We begin with the raw amino-acid sequence, 628 residues long: MBT domain-containing protein 1 (628 aa).

A disordered region spans residues 1-31 (MFDGYDSCSEDTSSSSSSEESEEEVAPLPSN). The segment at 45 to 80 (PDGKSGMATCEMCGMVGVRDAFYSKTKRFCSVSCSR) adopts an FCS-type zinc-finger fold. The Zn(2+) site is built by Cys54, Cys57, Cys74, and Cys78. Position 115 is an N6-acetyllysine (Lys115). 4 MBT repeats span residues 141-245 (FSWG…LVPP), 253-350 (TNWK…IGHR), 351-456 (FKRS…LTPP), and 464-560 (FKWF…LQPP). Disordered regions lie at residues 560–590 (PASQ…HKKM) and 606–628 (NFLQ…KQEP). The span at 562-573 (SQSSRENQSASS) shows a compositional bias: low complexity. Basic residues predominate over residues 574-590 (KQKKKAKSQQYKGHKKM). A compositionally biased stretch (polar residues) spans 609 to 620 (QGASDQESNGSA).

In terms of assembly, monomer. Component of the NuA4 histone acetyltransferase complex. Interacts with EPC1; interaction is direct and promotes recruitment of MBTD1 into the NuA4 histone acetyltransferase complex.

The protein resides in the nucleus. Its subcellular location is the chromosome. Functionally, chromatin reader component of the NuA4 histone acetyltransferase complex, a multiprotein complex involved in transcriptional activation of select genes principally by acetylation of nucleosomal histones H4 and H2A. The NuA4 complex plays a direct role in repair of DNA double-strand breaks (DSBs) by promoting homologous recombination (HR). MBTD1 specifically recognizes and binds monomethylated and dimethylated 'Lys-20' on histone H4 (H4K20me1 and H4K20me2, respectively). In the NuA4 complex, MBTD1 promotes recruitment of the complex to H4K20me marks by competing with TP53BP1 for binding to H4K20me. Following recruitment to H4K20me at DNA breaks, the NuA4 complex catalyzes acetylation of 'Lys-15' on histone H2A (H2AK15), blocking the ubiquitination mark required for TP53BP1 localization at DNA breaks, thereby promoting homologous recombination (HR). This Homo sapiens (Human) protein is MBT domain-containing protein 1.